Here is an 84-residue protein sequence, read N- to C-terminus: GTP cyclohydrolase 1 feedback regulatory protein (84 aa).

This sequence belongs to the GFRP family. Homopentamer. Forms a complex with GCH1 where a GCH1 homodecamer is sandwiched by two GFRP homopentamers.

The protein localises to the nucleus. It is found in the nucleus membrane. Its subcellular location is the cytoplasm. It localises to the cytosol. Functionally, mediates tetrahydrobiopterin inhibition of GTP cyclohydrolase 1. This Xenopus laevis (African clawed frog) protein is GTP cyclohydrolase 1 feedback regulatory protein (gchfr).